A 70-amino-acid chain; its full sequence is Large ribosomal subunit protein bL31 (70 aa).

Zn(2+) contacts are provided by cysteine 16, cysteine 18, cysteine 37, and cysteine 40.

This sequence belongs to the bacterial ribosomal protein bL31 family. Type A subfamily. In terms of assembly, part of the 50S ribosomal subunit. Zn(2+) serves as cofactor.

In terms of biological role, binds the 23S rRNA. The protein is Large ribosomal subunit protein bL31 of Colwellia psychrerythraea (strain 34H / ATCC BAA-681) (Vibrio psychroerythus).